A 491-amino-acid chain; its full sequence is MELRLYDTLTRDKRPFTPIDPANVRMYVCGPTVYDFAHIGNARPVIVFDVLFRLLRHLYGEAHVKYVRNITDVDDKINDRAARDYPGLPLNEAIRKVTEQTERQFHDDVDALGCLRPTVEPRATEHIGEMRSIIEKLVAGGFAYVEQDHVLFSPSAMNAANGVLPRYGSLANRSLDEMIAGARVDVAPYKRDATDFVLWKPSKPGEPSWPSPAGIATPGRPGWHIECSAMSWKHLGETFDIHGGGIDLVFPHHENEVAQSCCAFHTKRMAQTWMHNGFLQVEGEKMSKSLGNFITIRELLATNKFGGRSWDGATLRLAMLKTHYRQPIDWTVDALEEAQKRVAKYRRTLERFRGGKNVEVPHGVVSALSDDLNTHAAITELDALNRRANGVTHEGPTSEADALAANAIAADELRASLRLLGISVASERSGAVNQIFDQNIQRLIAVRTAARANKDWKESDRIRDELAAMGVVLKDGKDADGKPVTTWELAR.

Zn(2+) is bound at residue Cys29. Residues Pro31–Asn41 carry the 'HIGH' region motif. 3 residues coordinate Zn(2+): Cys227, His252, and Glu256. The 'KMSKS' region signature appears at Lys285 to Ser289. Lys288 provides a ligand contact to ATP.

It belongs to the class-I aminoacyl-tRNA synthetase family. As to quaternary structure, monomer. It depends on Zn(2+) as a cofactor.

Its subcellular location is the cytoplasm. The catalysed reaction is tRNA(Cys) + L-cysteine + ATP = L-cysteinyl-tRNA(Cys) + AMP + diphosphate. The polypeptide is Cysteine--tRNA ligase (Rhodopseudomonas palustris (strain TIE-1)).